A 207-amino-acid chain; its full sequence is Transcriptional regulatory protein RcsA (207 aa).

An HTH luxR-type domain is found at 131-196 (INLPTLSLSR…VIYHVVRLTD (66 aa)). Positions 155 to 174 (TIQISDRMNIKAKTVSSHKG) form a DNA-binding region, H-T-H motif.

This sequence belongs to the RcsA family. Interacts with RcsB.

In terms of biological role, component of the Rcs signaling system, which controls transcription of numerous genes. Binds, with RcsB, to the RcsAB box to regulate expression of genes. The polypeptide is Transcriptional regulatory protein RcsA (Salmonella typhi).